The chain runs to 552 residues: DNA ligase (552 aa).

ATP is bound at residue Glu229. Catalysis depends on Lys231, which acts as the N6-AMP-lysine intermediate. Arg236 and Glu283 together coordinate ATP. Residues Glu283 and Glu377 each contribute to the Mg(2+) site. ATP is bound by residues Lys382 and Lys397.

It belongs to the ATP-dependent DNA ligase family. In terms of assembly, interacts with host TOP2A and TOP2B. It depends on Mg(2+) as a cofactor.

The protein resides in the host cytoplasm. It catalyses the reaction ATP + (deoxyribonucleotide)n-3'-hydroxyl + 5'-phospho-(deoxyribonucleotide)m = (deoxyribonucleotide)n+m + AMP + diphosphate.. Functionally, DNA ligase that seals nicks in double-stranded DNA during DNA replication, DNA recombination and DNA repair. Recruits cellular topoisomerase II to sites of viral replication and assembly. This is DNA ligase (OPG180) from Vaccinia virus (strain Ankara) (VACV).